The chain runs to 617 residues: Solute carrier family 2, facilitated glucose transporter member 12 (617 aa).

The interval 1–29 (MVPVENTEGPSLLNQKGTAVETEGSGSRH) is disordered. The Cytoplasmic portion of the chain corresponds to 1–44 (MVPVENTEGPSLLNQKGTAVETEGSGSRHPPWARGCGMFTFLSS). The span at 8–17 (EGPSLLNQKG) shows a compositional bias: polar residues. A helical transmembrane segment spans residues 45–65 (VTAAVSGLLVGYELGIISGAL). Residues 66–80 (LQIKTLLALSCHEQE) lie on the Extracellular side of the membrane. Residues 81–101 (MVVSSLVIGALLASLTGGVLI) traverse the membrane as a helical segment. The Cytoplasmic segment spans residues 102 to 115 (DRYGRRTAIILSSC). A helical membrane pass occupies residues 116–136 (LLGLGSLVLILSLSYTVLIVG). Arg-137 is a topological domain (extracellular). Residues 138 to 158 (IAIGVSISLSSIATCVYIAEI) form a helical membrane-spanning segment. The Cytoplasmic segment spans residues 159-172 (APQHRRGLLVSLNE). Residues 173–193 (LMIVIGILSAYISNYAFANVF) traverse the membrane as a helical segment. The Extracellular segment spans residues 194–197 (HGWK). The chain crosses the membrane as a helical span at residues 198-218 (YMFGLVIPLGVLQAIAMYFLP). Over 219–278 (PSPRFLVMKGQEGAASKVLGRLRALSDTTEELTVIKSSLKDEYQYSFWDLFRSKDNMRTR) the chain is Cytoplasmic. A helical membrane pass occupies residues 279–299 (IMIGLTLVFFVQITGQPNILF). Over 300-317 (YASTVLKSVGFQSNEAAS) the chain is Extracellular. Residues 318–338 (LASTGVGVVKVISTIPATLLV) traverse the membrane as a helical segment. Topologically, residues 339–345 (DHVGSKT) are cytoplasmic. A helical transmembrane segment spans residues 346 to 366 (FLCIGSSVMAASLVTMGIVNL). The Extracellular portion of the chain corresponds to 367–466 (NIHMNFTHIC…PAFLKWLSLA (100 aa)). Residues Asn-371, Asn-383, Asn-396, and Asn-401 are each glycosylated (N-linked (GlcNAc...) asparagine). The helical transmembrane segment at 467–487 (SLLVYVAAFSIGLGPMPWLVL) threads the bilayer. Residues 488–498 (SEIFPGGIRGR) are Cytoplasmic-facing. The chain crosses the membrane as a helical span at residues 499–519 (AMALTSSMNWGINLLISLTFL). Topologically, residues 520 to 528 (TVTDLIGLP) are extracellular. A helical transmembrane segment spans residues 529–549 (WVCFIYTIMSLASLLFVVMFI). Over 550–617 (PETKGCSLEQ…GQSRQLSPET (68 aa)) the chain is Cytoplasmic.

It belongs to the major facilitator superfamily. Sugar transporter (TC 2.A.1.1) family. Glucose transporter subfamily. In terms of tissue distribution, predominantly expressed in skeletal muscle, heart and prostate, with lower levels in brain, placenta and kidney.

The protein resides in the cell membrane. The protein localises to the endomembrane system. It localises to the cytoplasm. It is found in the perinuclear region. The enzyme catalyses D-glucose(out) = D-glucose(in). Its function is as follows. Insulin-independent facilitative glucose transporter. The protein is Solute carrier family 2, facilitated glucose transporter member 12 of Homo sapiens (Human).